Reading from the N-terminus, the 458-residue chain is Protein adenylyltransferase FICD (458 aa).

Residues 1-23 (MILMPMASVVAVAEPKWVSVWGR) lie on the Cytoplasmic side of the membrane. The chain crosses the membrane as a helical; Signal-anchor for type II membrane protein span at residues 24–44 (FLWMALLSMALGSLLALLLPL). At 45–458 (GVVEEHCLAV…GFKETLPVRP (414 aa)) the chain is on the lumenal side. An O-AMP-threonine; by autocatalysis modification is found at T80. TPR repeat units lie at residues 106 to 139 (AKAALNQALEMKRQGKRGKAHKLFLHALKMDPGF) and 140 to 173 (VDALNEFGIFSEEDKDIIQADYLYTRALTISPFH). T183 carries the post-translational modification O-AMP-threonine; by autocatalysis. The Inhibitory (S/T)XXXE(G/N) motif signature appears at 230-235 (TVAIEG). An ATP-binding site is contributed by E234. N275 carries N-linked (GlcNAc...) asparagine glycosylation. Positions 285 to 420 (VTMDDMLEIH…VRPFIRFIAK (136 aa)) constitute a Fido domain. Position 316-319 (316-319 (VGHH)) interacts with ATP. H363 is a catalytic residue. ATP-binding positions include 367–374 (DGNGRTSR), 399–400 (YY), and N407.

It belongs to the fic family. Homodimer. Interacts with HD. Requires Mg(2+) as cofactor. Mn(2+) is required as a cofactor. In terms of processing, auto-AMPylated in vitro.

The protein resides in the endoplasmic reticulum membrane. It carries out the reaction L-tyrosyl-[protein] + ATP = O-(5'-adenylyl)-L-tyrosyl-[protein] + diphosphate. It catalyses the reaction 3-O-(5'-adenylyl)-L-threonyl-[protein] + H2O = L-threonyl-[protein] + AMP + H(+). The catalysed reaction is L-threonyl-[protein] + ATP = 3-O-(5'-adenylyl)-L-threonyl-[protein] + diphosphate. The side chain of Glu-234 determines which of the two opposing activities (AMPylase or de-AMPylase) will take place. In response to endoplasmic reticulum stress, mediates de-AMPylase activity. Adenylyltransferase activity is inhibited by the inhibitory helix present at the N-terminus: Glu-234 binds ATP and competes with ATP-binding at Arg-374, thereby preventing adenylyltransferase activity. In unstressed cells, disengagement of Glu-234 promotes adenylyltransferase activity. Activation dissociates ATP-binding from Glu-234, allowing ordered binding of the entire ATP moiety with the alpha-phosphate in an orientation that is productive for accepting an incoming target hydroxyl side chain. In terms of biological role, protein that can both mediate the addition of adenosine 5'-monophosphate (AMP) to specific residues of target proteins (AMPylation), and the removal of the same modification from target proteins (de-AMPylation), depending on the context. The side chain of Glu-231 determines which of the two opposing activities (AMPylase or de-AMPylase) will take place. Acts as a key regulator of the ERN1/IRE1-mediated unfolded protein response (UPR) by mediating AMPylation or de-AMPylation of HSPA5/BiP. In unstressed cells, acts as an adenylyltransferase by mediating AMPylation of HSPA5/BiP at 'Thr-518', thereby inactivating it. In response to endoplasmic reticulum stress, acts as a phosphodiesterase by mediating removal of ATP (de-AMPylation) from HSPA5/BiP at 'Thr-518', leading to restore HSPA5/BiP activity. Although it is able to AMPylate RhoA, Rac and Cdc42 Rho GTPases in vitro, Rho GTPases do not constitute physiological substrates. The polypeptide is Protein adenylyltransferase FICD (Mus musculus (Mouse)).